The chain runs to 408 residues: Peptidase T (408 aa).

His81 is a binding site for Zn(2+). Residue Asp83 is part of the active site. Position 142 (Asp142) interacts with Zn(2+). Residue Glu176 is the Proton acceptor of the active site. Glu177, Asp199, and His381 together coordinate Zn(2+).

This sequence belongs to the peptidase M20B family. It depends on Zn(2+) as a cofactor.

The protein resides in the cytoplasm. The catalysed reaction is Release of the N-terminal residue from a tripeptide.. Functionally, cleaves the N-terminal amino acid of tripeptides. The protein is Peptidase T of Streptococcus gordonii (strain Challis / ATCC 35105 / BCRC 15272 / CH1 / DL1 / V288).